The primary structure comprises 272 residues: F-actin-capping protein subunit beta (272 aa).

An N-acetylserine modification is found at Ser-2. At Ser-2 the chain carries Phosphoserine. An N6-acetyllysine modification is found at Lys-235. Residue Val-263 is modified to Phosphoserine.

Belongs to the F-actin-capping protein beta subunit family. As to quaternary structure, component of the F-actin capping complex, composed of a heterodimer of an alpha and a beta subunit. Subunit of dynactin, a multiprotein complex part of a tripartite complex with dynein and a adapter, such as BICDL1, BICD2 or HOOK3. The dynactin complex is built around ACTR1A/ACTB filament and consists of an actin-related filament composed of a shoulder domain, a pointed end and a barbed end. Its length is defined by its flexible shoulder domain. The soulder is composed of 2 DCTN1 subunits, 4 DCTN2 and 2 DCTN3. The 4 DCNT2 (via N-terminus) bind the ACTR1A filament and act as molecular rulers to determine the length. The pointed end is important for binding dynein-dynactin cargo adapters. Consists of 4 subunits: ACTR10, DCNT4, DCTN5 and DCTN6. The barbed end is composed of a CAPZA1:CAPZB heterodimers, which binds ACTR1A/ACTB filament and dynactin and stabilizes dynactin. Interacts with ARHGAP17. Interaction with RCSD1/CAPZIP. Component of the WASH complex, composed of F-actin-capping protein subunit alpha (CAPZA1, CAPZA2 or CAPZA3), F-actin-capping protein subunit beta (CAPZB), WASH (WASHC1, WASH2P, WASH3P, WASH4P, WASH5P or WASH6P), WASHC2 (WASHC2A or WASHC2C), WASHC3, WASHC4 and WASHC5. Interacts with ACTG1. Directly interacts with CRACD; this interaction decreases binding to actin.

It localises to the cytoplasm. It is found in the cytoskeleton. Its subcellular location is the myofibril. The protein resides in the sarcomere. In terms of biological role, F-actin-capping proteins bind in a Ca(2+)-independent manner to the fast growing ends of actin filaments (barbed end) thereby blocking the exchange of subunits at these ends. Unlike other capping proteins (such as gelsolin and severin), these proteins do not sever actin filaments. Plays a role in the regulation of cell morphology and cytoskeletal organization. Forms, with CAPZB, the barbed end of the fast growing ends of actin filaments in the dynactin complex and stabilizes dynactin structure. The dynactin multiprotein complex activates the molecular motor dynein for ultra-processive transport along microtubules. In Homo sapiens (Human), this protein is F-actin-capping protein subunit beta.